We begin with the raw amino-acid sequence, 372 residues long: 18-hydroxynorfluorocurarine reductase (372 aa).

Zn(2+) contacts are provided by C47, D50, H69, E70, C100, C103, C106, C114, and C172. NADP(+) contacts are provided by residues 197–202, K226, 283–285, S307, and R354; these read GLGGIG and LGA.

This sequence belongs to the zinc-containing alcohol dehydrogenase family. In terms of assembly, homodimer. Requires Zn(2+) as cofactor.

The catalysed reaction is (19E)-cur-19-en-17-al + NADP(+) = norfluorocurarine + NADPH + H(+). The enzyme catalyses 17,18-epoxy-17-hydroxycur-19-ene + NADP(+) = 18-hydroxynorfluorocurarine + NADPH + H(+). It participates in alkaloid biosynthesis. Its function is as follows. Alcohol dehydrogenase involved in the biosynthesis of curare monoterpene indole alkaloids (MIAs), natural products such as diaboline, a pharmacologically active compound used to regulate blood pressure. Curare alkaloids act as animal glycine receptor antagonists. Catalyzes the conversion of norfluorocurarine to desoxy Wieland-Gumlich aldehyde, and of 18-OH norfluorocurarine to Wieland-Gumlich aldehyde. The protein is 18-hydroxynorfluorocurarine reductase of Strychnos sp.